The chain runs to 374 residues: Protein dip1 (374 aa).

This sequence belongs to the LDB17 family.

The protein localises to the cytoplasm. It is found in the nucleus. Its subcellular location is the cell tip. Its function is as follows. May be involved in protein-linked oligosaccharide phosphorylation. In Schizosaccharomyces pombe (strain 972 / ATCC 24843) (Fission yeast), this protein is Protein dip1 (dip1).